A 141-amino-acid polypeptide reads, in one-letter code: Flagellar assembly factor FliW 1 (141 aa).

It belongs to the FliW family. As to quaternary structure, interacts with translational regulator CsrA and flagellin(s).

The protein localises to the cytoplasm. Functionally, acts as an anti-CsrA protein, binds CsrA and prevents it from repressing translation of its target genes, one of which is flagellin. Binds to flagellin and participates in the assembly of the flagellum. The polypeptide is Flagellar assembly factor FliW 1 (Desulfotalea psychrophila (strain LSv54 / DSM 12343)).